Here is a 591-residue protein sequence, read N- to C-terminus: Mono(ADP-ribosyl)transferase SpvB (591 aa).

The 204-residue stretch at Pro-373–Asp-576 folds into the TR mART core domain. Residues Arg-471, Ser-501, and Glu-538 contribute to the active site.

This sequence belongs to the SpvB family.

The protein localises to the secreted. The catalysed reaction is L-arginyl-[protein] + NAD(+) = N(omega)-(ADP-D-ribosyl)-L-arginyl-[protein] + nicotinamide + H(+). In terms of biological role, mono-ADP-ribosylates eukaryotic muscle and non-muscle actin on 'Arg-177'. ADP-ribosylation prevents the polymerization of G-actin to F-actin, causing actin filament depolymerization, destruction of the cytoskeleton and cytotoxicity. Does not possess NAD(+)-glycohydrolase activity, unlike most mART enzymes. This is Mono(ADP-ribosyl)transferase SpvB (spvB) from Salmonella enteritidis.